An 815-amino-acid polypeptide reads, in one-letter code: Leucine--tRNA ligase (815 aa).

The 'HIGH' region signature appears at 42–52 (PYPSGRLHMGH). The 'KMSKS' region signature appears at 574–578 (KMSKS). An ATP-binding site is contributed by K577.

It belongs to the class-I aminoacyl-tRNA synthetase family.

The protein localises to the cytoplasm. It carries out the reaction tRNA(Leu) + L-leucine + ATP = L-leucyl-tRNA(Leu) + AMP + diphosphate. The protein is Leucine--tRNA ligase of Marinomonas sp. (strain MWYL1).